The following is a 213-amino-acid chain: Orotate phosphoribosyltransferase (213 aa).

Residue K26 participates in 5-phospho-alpha-D-ribose 1-diphosphate binding. F34–F35 is a binding site for orotate. Residues Y72 to K73, R99, K100, K103, H105, and D124 to A132 contribute to the 5-phospho-alpha-D-ribose 1-diphosphate site. 2 residues coordinate orotate: T128 and R156.

The protein belongs to the purine/pyrimidine phosphoribosyltransferase family. PyrE subfamily. Homodimer. Mg(2+) is required as a cofactor.

The enzyme catalyses orotidine 5'-phosphate + diphosphate = orotate + 5-phospho-alpha-D-ribose 1-diphosphate. The protein operates within pyrimidine metabolism; UMP biosynthesis via de novo pathway; UMP from orotate: step 1/2. In terms of biological role, catalyzes the transfer of a ribosyl phosphate group from 5-phosphoribose 1-diphosphate to orotate, leading to the formation of orotidine monophosphate (OMP). This Serratia proteamaculans (strain 568) protein is Orotate phosphoribosyltransferase.